Consider the following 303-residue polypeptide: D-alanine--D-alanine ligase (303 aa).

An ATP-grasp domain is found at 104 to 300 (KLLWNAVGLP…FERLVERVLE (197 aa)). 132–187 (IAKLGLPLFVKPASEGSSVGVSKVKTAEQLLPAIEEALKYDSIVLVEENLAGAEYS) is a binding site for ATP. Mg(2+) contacts are provided by aspartate 254, glutamate 267, and asparagine 269.

The protein belongs to the D-alanine--D-alanine ligase family. Mg(2+) serves as cofactor. Requires Mn(2+) as cofactor.

Its subcellular location is the cytoplasm. It carries out the reaction 2 D-alanine + ATP = D-alanyl-D-alanine + ADP + phosphate + H(+). The protein operates within cell wall biogenesis; peptidoglycan biosynthesis. Its function is as follows. Cell wall formation. This is D-alanine--D-alanine ligase from Glaesserella parasuis serovar 5 (strain SH0165) (Haemophilus parasuis).